Here is an 80-residue protein sequence, read N- to C-terminus: uncharacterized protein (80 aa).

To M.leprae U650M.

This is an uncharacterized protein from Mycobacterium bovis (strain ATCC BAA-935 / AF2122/97).